A 338-amino-acid chain; its full sequence is Ketol-acid reductoisomerase (NADP(+)) (338 aa).

Residues 1 to 181 (MNVYYDKDCD…GGGRSGIIET (181 aa)) enclose the KARI N-terminal Rossmann domain. NADP(+) contacts are provided by residues 24-27 (YGSQ), R47, S50, S52, and 82-85 (DEFQ). The active site involves H107. G133 provides a ligand contact to NADP(+). Positions 182 to 327 (TFKDETETDL…AKLRSMMPWI (146 aa)) constitute a KARI C-terminal knotted domain. 4 residues coordinate Mg(2+): D190, E194, E226, and E230. A substrate-binding site is contributed by S251.

The protein belongs to the ketol-acid reductoisomerase family. Mg(2+) is required as a cofactor.

The enzyme catalyses (2R)-2,3-dihydroxy-3-methylbutanoate + NADP(+) = (2S)-2-acetolactate + NADPH + H(+). The catalysed reaction is (2R,3R)-2,3-dihydroxy-3-methylpentanoate + NADP(+) = (S)-2-ethyl-2-hydroxy-3-oxobutanoate + NADPH + H(+). It functions in the pathway amino-acid biosynthesis; L-isoleucine biosynthesis; L-isoleucine from 2-oxobutanoate: step 2/4. Its pathway is amino-acid biosynthesis; L-valine biosynthesis; L-valine from pyruvate: step 2/4. Its function is as follows. Involved in the biosynthesis of branched-chain amino acids (BCAA). Catalyzes an alkyl-migration followed by a ketol-acid reduction of (S)-2-acetolactate (S2AL) to yield (R)-2,3-dihydroxy-isovalerate. In the isomerase reaction, S2AL is rearranged via a Mg-dependent methyl migration to produce 3-hydroxy-3-methyl-2-ketobutyrate (HMKB). In the reductase reaction, this 2-ketoacid undergoes a metal-dependent reduction by NADPH to yield (R)-2,3-dihydroxy-isovalerate. This Psychrobacter sp. (strain PRwf-1) protein is Ketol-acid reductoisomerase (NADP(+)).